Here is a 556-residue protein sequence, read N- to C-terminus: MNPYAYAATHGPRAGDRVRLGDSGLTIRVESDAQQYGDEFLAGFGKTARDGLHLKAAAVRDTCDVVISNVVVIDAAQGIRKVSIGIREGRICSIGRAGNPDTLAGVDVVVGTGTSIVSGEGLIATAGAVDTHVHLLSPRIMEASLASGVTTVIGQEFGPVWGVGVNSPWALRHAFSAFDAWPVNIGFLGRGSSSDPAPLVEALAEGGASGFKVHEDMGAHTRALDTALRVAEEHDVQVALHSDGLNECLSVEDTLRVLDGRTIHAFHIEGCGGGHVPNVLKMAGVPNVIGSSTNPTLPFGRDAVAEHYGMIVSVHDLKPDLPGDAAMARDRIRAGTMGAEDVLHDLGAIGITSSDAQGMGRAGETVRRTFAMAGKMKAEFGAPEDHDNARVLRYLAKLTINPALAHGLAHEVGSIEVGKLADIVLWRPEFFGAKPQLVLKSGFPAYGVVGDPNAATDTCEPLVLGPQFGAHGATPAEISVAFVAQAALDQGNDRMPTRRRRVAVRGTRGIGPADLRLNSRTGAVDVDQRTGLVTLDGDPIRSEPADSVSLNRLYFL.

Residues 127–556 (GAVDTHVHLL…SVSLNRLYFL (430 aa)) form the Urease domain. Ni(2+)-binding residues include H132, H134, and K212. K212 carries the post-translational modification N6-carboxylysine. Substrate is bound at residue H214. Ni(2+) contacts are provided by H241 and H267. H315 acts as the Proton donor in catalysis. Ni(2+) is bound at residue D355.

This sequence belongs to the metallo-dependent hydrolases superfamily. Urease alpha subunit family. In terms of assembly, may form a heterohexamer of 3 UreC (alpha) and 3 UreAB (gamma/beta) subunits. May also form a heterotrimer of UreA (gamma), UreB (beta) and UreC (alpha) subunits. Three heterotrimers associate to form the active enzyme. The cofactor is Ni cation. Post-translationally, carboxylation allows a single lysine to coordinate two nickel ions.

The protein resides in the cytoplasm. The catalysed reaction is urea + 2 H2O + H(+) = hydrogencarbonate + 2 NH4(+). Its pathway is nitrogen metabolism; urea degradation; CO(2) and NH(3) from urea (urease route): step 1/1. This is Urease subunit alpha 1 from Streptomyces avermitilis (strain ATCC 31267 / DSM 46492 / JCM 5070 / NBRC 14893 / NCIMB 12804 / NRRL 8165 / MA-4680).